A 291-amino-acid chain; its full sequence is Bis(5'-nucleosyl)-tetraphosphatase, symmetrical (291 aa).

This sequence belongs to the Ap4A hydrolase family.

It catalyses the reaction P(1),P(4)-bis(5'-adenosyl) tetraphosphate + H2O = 2 ADP + 2 H(+). Hydrolyzes diadenosine 5',5'''-P1,P4-tetraphosphate to yield ADP. This chain is Bis(5'-nucleosyl)-tetraphosphatase, symmetrical, found in Coxiella burnetii (strain Dugway 5J108-111).